Here is a 322-residue protein sequence, read N- to C-terminus: Ribonucleoside-diphosphate reductase small subunit (322 aa).

The Fe cation site is built by Asp70, Glu101, and His104. Tyr108 is a catalytic residue. Fe cation contacts are provided by Glu163, Glu197, and His200.

It belongs to the ribonucleoside diphosphate reductase small chain family. In terms of assembly, heterodimer of a large and a small subunit. Fe cation is required as a cofactor.

The enzyme catalyses a 2'-deoxyribonucleoside 5'-diphosphate + [thioredoxin]-disulfide + H2O = a ribonucleoside 5'-diphosphate + [thioredoxin]-dithiol. In terms of biological role, provides the precursors necessary for DNA synthesis. Catalyzes the biosynthesis of deoxyribonucleotides from the corresponding ribonucleotides. This is Ribonucleoside-diphosphate reductase small subunit (RNR2) from Plasmodium falciparum (isolate FCR-3 / Gambia).